A 20-amino-acid chain; its full sequence is SNDVSWHEWKRMYNKEYNGA.

Belongs to the peptidase C1 family.

The protein localises to the lysosome. Thiol protease. The polypeptide is Cathepsin L-like cysteine proteinase (Fasciola hepatica (Liver fluke)).